A 583-amino-acid polypeptide reads, in one-letter code: Arginine--tRNA ligase (583 aa).

Residues 121 to 131 (ANPTGPLHLGH) carry the 'HIGH' region motif.

This sequence belongs to the class-I aminoacyl-tRNA synthetase family. In terms of assembly, monomer.

The protein localises to the cytoplasm. It carries out the reaction tRNA(Arg) + L-arginine + ATP = L-arginyl-tRNA(Arg) + AMP + diphosphate. The polypeptide is Arginine--tRNA ligase (argS) (Aquifex aeolicus (strain VF5)).